The primary structure comprises 451 residues: Inositol-pentakisphosphate 2-kinase (451 aa).

Met1 carries the post-translational modification N-acetylmethionine. Residues 19 to 22 and Arg40 each bind ATP; that span reads GGAN. Residues Arg45 and Arg130 each coordinate substrate. ATP is bound by residues 147-149 and 166-168; these read NDH and EIK. Positions 166 to 170 match the EXKPK motif motif; sequence EIKPK. Residues Lys170, Lys200, and Asn238 each coordinate substrate. Position 241 (Arg241) interacts with ATP. Zn(2+)-binding residues include His320, Cys330, Cys333, and His346. Asp368 provides a ligand contact to substrate. Asp407 serves as a coordination point for ATP. 3 residues coordinate substrate: Lys411, Arg415, and Tyr419.

Belongs to the IPK1 type 2 family. Zn(2+) serves as cofactor. In terms of tissue distribution, strongly expressed in leaves and cauline leaves. Weakly expressed in siliques and flowers. In flower, it is expressed in the major organs of developing flower buds. Strongly expressed in sepals, petals, in the male and female organs of immature and mature flower buds. Strongly expressed in the gynoecium and carpels which are fused to form the gynoecium. Also expressed in the transmitting tissue and ovules.

It carries out the reaction 1D-myo-inositol 1,3,4,5,6-pentakisphosphate + ATP = 1D-myo-inositol hexakisphosphate + ADP + H(+). Phosphorylates Ins(1,3,4,5,6)P5 at position 2 to form Ins(1,2,3,4,5,6)P6 (InsP6 or phytate). Phytate is a regulator of intracellular signaling, a highly abundant animal antinutrient, and a phosphate store in plant seeds. Also phosphorylates Ins(1,3,4,6)P4 and Ins(1,4,5,6)P4 to produce Ins(1,2,3,4,6)P5 and Ins(1,2,4,5,6)P5. This chain is Inositol-pentakisphosphate 2-kinase (IPK1), found in Arabidopsis thaliana (Mouse-ear cress).